We begin with the raw amino-acid sequence, 113 residues long: Large ribosomal subunit protein bL17 (113 aa).

The protein belongs to the bacterial ribosomal protein bL17 family. In terms of assembly, part of the 50S ribosomal subunit. Contacts protein L32.

In Alkaliphilus metalliredigens (strain QYMF), this protein is Large ribosomal subunit protein bL17.